The sequence spans 131 residues: Phosphoribosyl-AMP cyclohydrolase (131 aa).

Aspartate 76 contacts Mg(2+). Cysteine 77 contacts Zn(2+). Mg(2+) contacts are provided by aspartate 78 and aspartate 80. Cysteine 94 and cysteine 101 together coordinate Zn(2+).

The protein belongs to the PRA-CH family. As to quaternary structure, homodimer. Mg(2+) is required as a cofactor. It depends on Zn(2+) as a cofactor.

It is found in the cytoplasm. It carries out the reaction 1-(5-phospho-beta-D-ribosyl)-5'-AMP + H2O = 1-(5-phospho-beta-D-ribosyl)-5-[(5-phospho-beta-D-ribosylamino)methylideneamino]imidazole-4-carboxamide. The protein operates within amino-acid biosynthesis; L-histidine biosynthesis; L-histidine from 5-phospho-alpha-D-ribose 1-diphosphate: step 3/9. Its function is as follows. Catalyzes the hydrolysis of the adenine ring of phosphoribosyl-AMP. The sequence is that of Phosphoribosyl-AMP cyclohydrolase from Stutzerimonas stutzeri (strain A1501) (Pseudomonas stutzeri).